Here is a 172-residue protein sequence, read N- to C-terminus: MKRIITLTVVNRSGVLNRITGLFTKRHYNIESITVGHTETAGVSRITFVVHVEGENDVEQLTKQLNKQIDVLKVTDITNQSIVQRELALIKVVSAPSTRTEINGIIEPFRASVVDVSRDSIVVQVTGESNKIEALIELLKPYGIKEIARTGTTAFARGTQQKASSNKTISIV.

The ACT domain maps to 4 to 79; it reads IITLTVVNRS…DVLKVTDITN (76 aa).

It belongs to the acetolactate synthase small subunit family. Dimer of large and small chains.

The enzyme catalyses 2 pyruvate + H(+) = (2S)-2-acetolactate + CO2. Its pathway is amino-acid biosynthesis; L-isoleucine biosynthesis; L-isoleucine from 2-oxobutanoate: step 1/4. It functions in the pathway amino-acid biosynthesis; L-valine biosynthesis; L-valine from pyruvate: step 1/4. This chain is Acetolactate synthase small subunit (ilvH), found in Bacillus subtilis (strain 168).